A 165-amino-acid chain; its full sequence is UPF0254 protein MmarC7_0182 (165 aa).

Belongs to the UPF0254 family.

The sequence is that of UPF0254 protein MmarC7_0182 from Methanococcus maripaludis (strain C7 / ATCC BAA-1331).